A 341-amino-acid chain; its full sequence is GTPase Obg (341 aa).

Residues 1 to 159 (MKFLDQAKVY…RTLWLRLKLI (159 aa)) form the Obg domain. Residues 160-327 (ADAGLIGLPN…MLRAGAHMIE (168 aa)) enclose the OBG-type G domain. GTP is bound by residues 166–173 (GLPNAGKS), 191–195 (FTTLY), 212–215 (DIPG), 279–282 (SQID), and 308–310 (SAV). Residues Ser173 and Thr193 each coordinate Mg(2+).

The protein belongs to the TRAFAC class OBG-HflX-like GTPase superfamily. OBG GTPase family. In terms of assembly, monomer. Mg(2+) serves as cofactor.

It is found in the cytoplasm. An essential GTPase which binds GTP, GDP and possibly (p)ppGpp with moderate affinity, with high nucleotide exchange rates and a fairly low GTP hydrolysis rate. Plays a role in control of the cell cycle, stress response, ribosome biogenesis and in those bacteria that undergo differentiation, in morphogenesis control. This chain is GTPase Obg, found in Bartonella quintana (strain Toulouse) (Rochalimaea quintana).